The sequence spans 570 residues: Molecular chaperone MKKS (570 aa).

192 to 199 (GHIILGKS) provides a ligand contact to ATP. Positions 198–370 (KSLIVPLKGQ…FHLIPNEATI (173 aa)) are substrate-binding apical domain.

It belongs to the TCP-1 chaperonin family. As to quaternary structure, component of a complex composed at least of MKKS, BBS10, BBS12, TCP1, CCT2, CCT3, CCT4, CCT5 and CCT8. Interacts with STUB1. Interacts with BBS2 (via coiled coil domain). Interacts with CCDC28B. Interacts with BBS12. Interacts with SMARCC1, a component of the SWI/SNF complexes; the interaction takes place predominantly in the cytoplasm and may modulate SMARCC1 location. Interacts with DLEC1. As to expression, widely expressed in adult and fetal tissues.

It localises to the cytoplasm. The protein resides in the cytoskeleton. The protein localises to the microtubule organizing center. It is found in the centrosome. Its subcellular location is the cytosol. It localises to the nucleus. Probable molecular chaperone that assists the folding of proteins upon ATP hydrolysis. Plays a role in the assembly of BBSome, a complex involved in ciliogenesis regulating transports vesicles to the cilia. May play a role in protein processing in limb, cardiac and reproductive system development. May play a role in cytokinesis. This Homo sapiens (Human) protein is Molecular chaperone MKKS.